The following is a 538-amino-acid chain: Casein kinase I homolog 1 (538 aa).

Positions 39–61 are disordered; it reads SPARSSMTATTAANSNSNSSRDD. Over residues 41-57 the composition is skewed to low complexity; that stretch reads ARSSMTATTAANSNSNS. The region spanning 69-353 is the Protein kinase domain; the sequence is YKIGKKIGEG…ETADGQYDWM (285 aa). ATP is bound by residues 75 to 83 and lysine 98; that span reads IGEGSFGVL. Aspartate 188 serves as the catalytic Proton acceptor. 2 disordered regions span residues 366–428 and 474–527; these read NKKP…KPKL and QQQL…LAAS. Composition is skewed to low complexity over residues 391–410 and 474–498; these read QLQM…QQQQ and QQQL…QFGA. 3 positions are modified to phosphoserine: serine 522, serine 523, and serine 527. Residues cysteine 537 and cysteine 538 are each lipidated (S-palmitoyl cysteine).

The protein belongs to the protein kinase superfamily. CK1 Ser/Thr protein kinase family. Casein kinase I subfamily. In terms of processing, palmitoylated by AKR1.

It is found in the cell membrane. The protein resides in the mitochondrion membrane. The enzyme catalyses L-seryl-[protein] + ATP = O-phospho-L-seryl-[protein] + ADP + H(+). It catalyses the reaction L-threonyl-[protein] + ATP = O-phospho-L-threonyl-[protein] + ADP + H(+). Functionally, casein kinases are operationally defined by their preferential utilization of acidic proteins such as caseins as substrates. The chain is Casein kinase I homolog 1 (YCK1) from Saccharomyces cerevisiae (strain ATCC 204508 / S288c) (Baker's yeast).